The chain runs to 228 residues: Imidazole glycerol phosphate synthase subunit HisH (228 aa).

The 215-residue stretch at 4 to 218 folds into the Glutamine amidotransferase type-1 domain; the sequence is DIAVVDYGMG…VTWNPGEHAS (215 aa). The active-site Nucleophile is Cys83. Active-site residues include His193 and Glu195.

Heterodimer of HisH and HisF.

The protein localises to the cytoplasm. The catalysed reaction is 5-[(5-phospho-1-deoxy-D-ribulos-1-ylimino)methylamino]-1-(5-phospho-beta-D-ribosyl)imidazole-4-carboxamide + L-glutamine = D-erythro-1-(imidazol-4-yl)glycerol 3-phosphate + 5-amino-1-(5-phospho-beta-D-ribosyl)imidazole-4-carboxamide + L-glutamate + H(+). It carries out the reaction L-glutamine + H2O = L-glutamate + NH4(+). Its pathway is amino-acid biosynthesis; L-histidine biosynthesis; L-histidine from 5-phospho-alpha-D-ribose 1-diphosphate: step 5/9. In terms of biological role, IGPS catalyzes the conversion of PRFAR and glutamine to IGP, AICAR and glutamate. The HisH subunit catalyzes the hydrolysis of glutamine to glutamate and ammonia as part of the synthesis of IGP and AICAR. The resulting ammonia molecule is channeled to the active site of HisF. In Thiobacillus denitrificans (strain ATCC 25259 / T1), this protein is Imidazole glycerol phosphate synthase subunit HisH.